Consider the following 848-residue polypeptide: Trimethylamine-N-oxide reductase 1 (848 aa).

The tat-type signal signal peptide spans 1–39 (MNNNDLFQASRRRFLAQLGGLTVAGMLGTSLLTPRRATA). Ser-191 contacts Mo-bis(molybdopterin guanine dinucleotide).

The protein belongs to the prokaryotic molybdopterin-containing oxidoreductase family. Requires Mo-bis(molybdopterin guanine dinucleotide) as cofactor. Predicted to be exported by the Tat system. The position of the signal peptide cleavage has not been experimentally proven.

The protein localises to the periplasm. The enzyme catalyses trimethylamine + 2 Fe(III)-[cytochrome c] + H2O = trimethylamine N-oxide + 2 Fe(II)-[cytochrome c] + 3 H(+). In terms of biological role, reduces trimethylamine-N-oxide (TMAO) into trimethylamine; an anaerobic reaction coupled to energy-yielding reactions. In Escherichia coli O6:H1 (strain CFT073 / ATCC 700928 / UPEC), this protein is Trimethylamine-N-oxide reductase 1 (torA).